Reading from the N-terminus, the 216-residue chain is MVVIGEKFPEVEVKTTHGVIKLPDYFTKQGKWFILFSHPADFTPVCTTEFYGMQKRVEEFRKLGVEPIGLSVDQVFSHIKWIEWIKDNLSVEIDFPVIADDRGELAEKLGMIPSGATITARAVFVVDDKGIIRAIVYYPAEVGRDWDEILRLVKALKISTEKGVALPHKWPNNELIGDKVIVPPASTIEEKKQREEAKAKGEIECYDWWFCYKKLE.

Positions 2–158 (VVIGEKFPEV…ILRLVKALKI (157 aa)) constitute a Thioredoxin domain. Cys-46 serves as the catalytic Cysteine sulfenic acid (-SOH) intermediate. Arg-121 contributes to the substrate binding site. Cys-205 and Cys-211 are joined by a disulfide.

Belongs to the peroxiredoxin family. Prx6 subfamily. Homodecamer. Pentamer of dimers that assemble into a ring structure.

The protein resides in the cytoplasm. The catalysed reaction is a hydroperoxide + [thioredoxin]-dithiol = an alcohol + [thioredoxin]-disulfide + H2O. Thiol-specific peroxidase that catalyzes the reduction of hydrogen peroxide and organic hydroperoxides to water and alcohols, respectively. Plays a role in cell protection against oxidative stress by detoxifying peroxides. This chain is Peroxiredoxin (ahpC), found in Pyrococcus horikoshii (strain ATCC 700860 / DSM 12428 / JCM 9974 / NBRC 100139 / OT-3).